Here is a 186-residue protein sequence, read N- to C-terminus: Elongation factor P (186 aa).

This sequence belongs to the elongation factor P family.

It localises to the cytoplasm. Its pathway is protein biosynthesis; polypeptide chain elongation. Involved in peptide bond synthesis. Stimulates efficient translation and peptide-bond synthesis on native or reconstituted 70S ribosomes in vitro. Probably functions indirectly by altering the affinity of the ribosome for aminoacyl-tRNA, thus increasing their reactivity as acceptors for peptidyl transferase. This chain is Elongation factor P, found in Synechococcus sp. (strain CC9902).